The chain runs to 303 residues: tRNA pseudouridine synthase B (303 aa).

Asp38 (nucleophile) is an active-site residue.

The protein belongs to the pseudouridine synthase TruB family. Type 1 subfamily.

The catalysed reaction is uridine(55) in tRNA = pseudouridine(55) in tRNA. Functionally, responsible for synthesis of pseudouridine from uracil-55 in the psi GC loop of transfer RNAs. The sequence is that of tRNA pseudouridine synthase B from Oceanobacillus iheyensis (strain DSM 14371 / CIP 107618 / JCM 11309 / KCTC 3954 / HTE831).